The following is a 507-amino-acid chain: Myocyte-specific enhancer factor 2A (507 aa).

Residues 3–57 (RKKIQITRIMDERNRQVTFTKRKFGLMKKAYELSVLCDCEIALIIFNSSNKLFQY) enclose the MADS-box domain. A DNA-binding region (mef2-type) is located at residues 58 to 86 (ASTDMDKVLLKYTEYNEPHESGTNSDIVE). S59 carries the post-translational modification Phosphoserine; by CK2. A phosphoserine mark is found at S98 and S235. The interval 175-269 (ADSSMLSPPQ…GGGNLGMNSR (95 aa)) is disordered. The segment covering 209–245 (LSTSDLTVPNGAGSSPVGNGFVNSRASPNLVGTTGAN) has biased composition (polar residues). K249 is subject to N6-acetyllysine. Phosphoserine is present on S255. The segment at 266–283 (MNSRKPDLRVVIPPSSKG) is required for interaction with MAPKs. The interval 289–296 (SEEEELEL) is beta domain. A phosphothreonine; by MAPK7 and MAPK14 mark is found at T312 and T319. Phosphoserine; by MAPK7 is present on S355. Polar residues predominate over residues 390 to 402 (SNLSINTNQNINI). The interval 390 to 507 (SNLSINTNQN…KRMRMDAWVT (118 aa)) is disordered. Residue K403 is modified to N6-acetyllysine; alternate. K403 participates in a covalent cross-link: Glycyl lysine isopeptide (Lys-Gly) (interchain with G-Cter in SUMO); alternate. S408 carries the post-translational modification Phosphoserine; by CDK5. T415 is modified (phosphothreonine). The segment covering 423–443 (QPPPPSQAPQPQPPQPQPQPQ) has biased composition (pro residues). Phosphoserine is present on S453. Low complexity predominate over residues 453-466 (SPVDSLSSSSSSYD). 2 stretches are compositionally biased toward basic and acidic residues: residues 467–477 (GSDREDPRGDF) and 488–507 (NTED…AWVT).

It belongs to the MEF2 family. As to quaternary structure, binds DNA as a homo- or heterodimer. Dimerizes with MEF2D. Interacts with HDAC7. Interacts with PIAS1; the interaction enhances sumoylation. Interacts with HDAC4, HDAC9 and SLC2A4RG. Interacts (via the N-terminal) with MAPK7; the interaction results in the phosphorylation and transcriptional activity of MEF2A. Constitutive phosphorylation on Ser-408 promotes Lys-403 sumoylation thus preventing acetylation at this site. Dephosphorylation on Ser-408 by PPP3CA upon neuron depolarization promotes a switch from sumoylation to acetylation on residue Lys-403 leading to inhibition of dendrite claw differentiation. Phosphorylation on Thr-312 and Thr-319 are the main sites involved in p38 MAPK signaling and activate transcription. Phosphorylated on these sites by MAPK14/p38alpha and MAPK11/p38beta, but not by MAPK13/p38delta nor by MAPK12/p38gamma. Phosphorylation on Ser-408 by CDK5 induced by neurotoxicity inhibits MEF2A transcriptional activation leading to apoptosis of cortical neurons. Phosphorylation on Thr-312, Thr-319 and Ser-355 can be induced by EGF. In terms of processing, sumoylation on Lys-403 is enhanced by PIAS1 and represses transcriptional activity. Phosphorylation on Ser-408 is required for sumoylation. Has no effect on nuclear location nor on DNA binding. Sumoylated with SUMO1 and, to a lesser extent with SUMO2 and SUMO3. PIASx facilitates sumoylation in postsynaptic dendrites in the cerebellar cortex and promotes their morphogenesis. Post-translationally, acetylation on Lys-403 activates transcriptional activity. Acetylated by p300 on several sites in diffentiating myocytes. Acetylation on Lys-4 increases DNA binding and transactivation. Hyperacetylation by p300 leads to enhanced cardiac myocyte growth and heart failure. Proteolytically cleaved on several sites by caspase 3 and caspase 7 following neurotoxicity. Preferentially cleaves the CDK5-mediated hyperphosphorylated form which leads to cortical neuron apoptosis and transcriptional inactivation.

It localises to the nucleus. Transcriptional activator which binds specifically to the MEF2 element, 5'-YTA[AT](4)TAR-3', found in numerous muscle-specific genes. Also involved in the activation of numerous growth factor- and stress-induced genes. Mediates cellular functions not only in skeletal and cardiac muscle development, but also in neuronal differentiation and survival. Plays diverse roles in the control of cell growth, survival and apoptosis via p38 MAPK signaling in muscle-specific and/or growth factor-related transcription. In cerebellar granule neurons, phosphorylated and sumoylated MEF2A represses transcription of NUR77 promoting synaptic differentiation. Associates with chromatin to the ZNF16 promoter. The chain is Myocyte-specific enhancer factor 2A (MEF2A) from Sus scrofa (Pig).